The sequence spans 294 residues: Cytosolic Fe-S cluster assembly factor CFD1 (294 aa).

Position 25–32 (25–32 (GKGGVGKS)) interacts with ATP. Residues C214 and C217 each contribute to the [4Fe-4S] cluster site.

The protein belongs to the Mrp/NBP35 ATP-binding proteins family. NUBP2/CFD1 subfamily. In terms of assembly, heterotetramer of 2 NBP35 and 2 CFD1 chains. [4Fe-4S] cluster serves as cofactor.

It is found in the cytoplasm. In terms of biological role, component of the cytosolic iron-sulfur (Fe/S) protein assembly (CIA) machinery. Required for maturation of extramitochondrial Fe-S proteins. The NBP35-CFD1 heterotetramer forms a Fe-S scaffold complex, mediating the de novo assembly of an Fe-S cluster and its transfer to target apoproteins. Required for biogenesis and export of both ribosomal subunits, which may reflect a role in assembly of the Fe/S clusters in RLI1, a protein which performs rRNA processing and ribosome export. The polypeptide is Cytosolic Fe-S cluster assembly factor CFD1 (Candida albicans (strain SC5314 / ATCC MYA-2876) (Yeast)).